Here is a 219-residue protein sequence, read N- to C-terminus: Probable GTP-binding protein EngB (219 aa).

The EngB-type G domain maps to G33–H217. GTP-binding positions include G41–S48, G68–E72, D95–G98, T162–D165, and T196–S198. Mg(2+) contacts are provided by S48 and T70.

This sequence belongs to the TRAFAC class TrmE-Era-EngA-EngB-Septin-like GTPase superfamily. EngB GTPase family. Mg(2+) serves as cofactor.

Functionally, necessary for normal cell division and for the maintenance of normal septation. The polypeptide is Probable GTP-binding protein EngB (Allorhizobium ampelinum (strain ATCC BAA-846 / DSM 112012 / S4) (Agrobacterium vitis (strain S4))).